The chain runs to 503 residues: ATP synthase subunit alpha (503 aa).

170–177 provides a ligand contact to ATP; that stretch reads GDKQTGKT.

This sequence belongs to the ATPase alpha/beta chains family. F-type ATPases have 2 components, CF(1) - the catalytic core - and CF(0) - the membrane proton channel. CF(1) has five subunits: alpha(3), beta(3), gamma(1), delta(1), epsilon(1). CF(0) has three main subunits: a(1), b(2) and c(9-12). The alpha and beta chains form an alternating ring which encloses part of the gamma chain. CF(1) is attached to CF(0) by a central stalk formed by the gamma and epsilon chains, while a peripheral stalk is formed by the delta and b chains.

The protein localises to the cell inner membrane. It catalyses the reaction ATP + H2O + 4 H(+)(in) = ADP + phosphate + 5 H(+)(out). Functionally, produces ATP from ADP in the presence of a proton gradient across the membrane. The alpha chain is a regulatory subunit. This chain is ATP synthase subunit alpha, found in Helicobacter pylori (strain J99 / ATCC 700824) (Campylobacter pylori J99).